A 323-amino-acid polypeptide reads, in one-letter code: Fructose-1,6-bisphosphatase class 1 (323 aa).

Positions 88, 107, 109, and 110 each coordinate Mg(2+). Substrate-binding positions include 110 to 113 (DGSS) and Asn-200. Glu-272 contacts Mg(2+).

Belongs to the FBPase class 1 family. In terms of assembly, homotetramer. The cofactor is Mg(2+).

Its subcellular location is the cytoplasm. It catalyses the reaction beta-D-fructose 1,6-bisphosphate + H2O = beta-D-fructose 6-phosphate + phosphate. Its pathway is carbohydrate biosynthesis; gluconeogenesis. This Acinetobacter baylyi (strain ATCC 33305 / BD413 / ADP1) protein is Fructose-1,6-bisphosphatase class 1.